We begin with the raw amino-acid sequence, 242 residues long: Protein FsrB (242 aa).

5 helical membrane passes run 29 to 49 (LTVY…SVLF), 52 to 72 (LSET…AGGW), 78 to 95 (WLCR…PFVL), 100 to 120 (VSLP…LFYW), and 160 to 180 (KIAS…LPVT).

This sequence belongs to the AgrB family.

It is found in the cell membrane. In terms of biological role, may be involved in the proteolytic processing of a quorum sensing system signal molecule precursor required for the regulation of the virulence genes for gelatinase (gelE) and a serine protease (sprE). The chain is Protein FsrB (fsrB) from Enterococcus faecalis (strain ATCC 47077 / OG1RF).